The following is a 275-amino-acid chain: MNTKEIVNKYEFKFNKNLGQNFLIDESVLEDIIEGAEISKEDTVIEIGPGVGTLTKELLERAKEVYSIELDGDLIPILQEELKEYNNFTLIHKDALKIDFNELMENKESIKLVANLPYYVTTPIISRLLTEKCDFKSLTIMIQKEVAERINAEPNCKEYGSLTVLVQYYCNTKIIRKVSPNSFIPRPKVDSIVIKLDRLSEPRVRVKSQKLFFNVVRSSFNMRRKTLWNSLKSLNIDKESMENAFERAGIDPKRRGETLSIEEFGKLSDCIYDIL.

Residues N21, L23, G48, E69, D94, and N115 each contribute to the S-adenosyl-L-methionine site.

Belongs to the class I-like SAM-binding methyltransferase superfamily. rRNA adenine N(6)-methyltransferase family. RsmA subfamily.

It is found in the cytoplasm. It catalyses the reaction adenosine(1518)/adenosine(1519) in 16S rRNA + 4 S-adenosyl-L-methionine = N(6)-dimethyladenosine(1518)/N(6)-dimethyladenosine(1519) in 16S rRNA + 4 S-adenosyl-L-homocysteine + 4 H(+). Specifically dimethylates two adjacent adenosines (A1518 and A1519) in the loop of a conserved hairpin near the 3'-end of 16S rRNA in the 30S particle. May play a critical role in biogenesis of 30S subunits. This Clostridium botulinum (strain Langeland / NCTC 10281 / Type F) protein is Ribosomal RNA small subunit methyltransferase A.